The primary structure comprises 468 residues: Zinc finger CCCH domain-containing protein 32 (468 aa).

Residues 1–25 (MYARNPPLNGSQSAQAPDWTPADAD) form a disordered region. 5 consecutive C3H1-type zinc fingers follow at residues 45–73 (RPGA…HPRD), 90–118 (RFGE…HPKN), 136–164 (REGD…HPQP), 289–317 (RPGE…HPRD), and 335–363 (RPGV…HPMG).

The protein localises to the nucleus. This chain is Zinc finger CCCH domain-containing protein 32, found in Arabidopsis thaliana (Mouse-ear cress).